Consider the following 412-residue polypeptide: Adenylosuccinate synthetase (412 aa).

GTP is bound by residues Gly12–Lys18 and Gly40–Glu42. Asp13 functions as the Proton acceptor in the catalytic mechanism. Residues Asp13 and Gly40 each contribute to the Mg(2+) site. Residues Asp13–Lys16, Asn38–His41, Arg134, Asn212, Thr227, and Arg291 contribute to the IMP site. The active-site Proton donor is the His41. Thr287 to Arg293 lines the substrate pocket. GTP contacts are provided by residues Arg293, Lys318–Asp320, and Gly400–Gly402.

This sequence belongs to the adenylosuccinate synthetase family. In terms of assembly, homodimer. It depends on Mg(2+) as a cofactor.

It localises to the cytoplasm. The catalysed reaction is IMP + L-aspartate + GTP = N(6)-(1,2-dicarboxyethyl)-AMP + GDP + phosphate + 2 H(+). Its pathway is purine metabolism; AMP biosynthesis via de novo pathway; AMP from IMP: step 1/2. Plays an important role in the de novo pathway and in the salvage pathway of purine nucleotide biosynthesis. Catalyzes the first committed step in the biosynthesis of AMP from IMP. This is Adenylosuccinate synthetase from Fusarium vanettenii (strain ATCC MYA-4622 / CBS 123669 / FGSC 9596 / NRRL 45880 / 77-13-4) (Fusarium solani subsp. pisi).